Reading from the N-terminus, the 292-residue chain is Short chain dehydrogenases/reductase notP' (292 aa).

Positions 1 to 25 are disordered; it reads MPQTSDGNVHAPQYREAKPSQGDPS. NADP(+)-binding residues include leucine 48, aspartate 97, lysine 158, tyrosine 193, lysine 197, isoleucine 230, and threonine 232. Tyrosine 193 functions as the Proton donor in the catalytic mechanism. Lysine 197 serves as the catalytic Lowers pKa of active site Tyr.

It belongs to the short-chain dehydrogenases/reductases (SDR) family.

In terms of biological role, short chain dehydrogenases/reductase; part of the gene cluster that mediates the biosynthesis of notoamide, a fungal indole alkaloid that belongs to a family of natural products containing a characteristic bicyclo[2.2.2]diazaoctane core. The first step of notoamide biosynthesis involves coupling of L-proline and L-tryptophan by the bimodular NRPS notE', to produce cyclo-L-tryptophan-L-proline called brevianamide F. The reverse prenyltransferase notF' then acts as a deoxybrevianamide E synthase and converts brevianamide F to deoxybrevianamide E via reverse prenylation at C-2 of the indole ring leading to the bicyclo[2.2.2]diazaoctane core. Deoxybrevianamide E is further hydroxylated at C-6 of the indole ring, likely catalyzed by the cytochrome P450 monooxygenase notG', to yield 6-hydroxy-deoxybrevianamide E. 6-hydroxy-deoxybrevianamide E is a specific substrate of the prenyltransferase notC' for normal prenylation at C-7 to produce 6-hydroxy-7-prenyl-deoxybrevianamide, also called notoamide S. As the proposed pivotal branching point in notoamide biosynthesis, notoamide S can be diverted to notoamide E through an oxidative pyran ring closure putatively catalyzed by either notH' cytochrome P450 monooxygenase or the notD' FAD-linked oxidoreductase. This step would be followed by an indole 2,3-epoxidation-initiated pinacol-like rearrangement catalyzed by the notB' FAD-dependent monooxygenase leading to the formation of notoamide C and notoamide D. On the other hand notoamide S is converted to notoamide T by notH' (or notD'), a bifunctional oxidase that also functions as the intramolecular Diels-Alderase responsible for generation of (-)-notoamide T. To generate antipodal (+)-notoaminide T, notH (or notD) in Aspergillus strain MF297-2 is expected to catalyze a Diels-Alder reaction leading to the opposite stereochemistry. The remaining oxidoreductase notD' (or notH') likely catalyzes the oxidative pyran ring formation to yield (-)-stephacidin A. The FAD-dependent monooxygenase notI' is highly similar to notB' and is predicted to catalyze a similar conversion from (-)-stephacidin A to (+)-notoamide B via the 2,3-epoxidation of (-)-stephacidin A followed by a pinacol-type rearrangement. Finally, it remains unclear which enzyme could be responsible for the final hydroxylation steps leading to notoamide A and sclerotiamide. The function of notP' in the notoamide biosynthesis has not been determined yet. The chain is Short chain dehydrogenases/reductase notP' from Aspergillus versicolor.